Here is a 302-residue protein sequence, read N- to C-terminus: Glycine--tRNA ligase alpha subunit (302 aa).

Belongs to the class-II aminoacyl-tRNA synthetase family. In terms of assembly, tetramer of two alpha and two beta subunits.

Its subcellular location is the cytoplasm. It catalyses the reaction tRNA(Gly) + glycine + ATP = glycyl-tRNA(Gly) + AMP + diphosphate. The sequence is that of Glycine--tRNA ligase alpha subunit from Xanthomonas oryzae pv. oryzae (strain MAFF 311018).